A 251-amino-acid polypeptide reads, in one-letter code: Ubiquinone/menaquinone biosynthesis C-methyltransferase UbiE (251 aa).

S-adenosyl-L-methionine is bound by residues Thr-74, Asp-95, and 123-124 (NA).

Belongs to the class I-like SAM-binding methyltransferase superfamily. MenG/UbiE family.

It carries out the reaction a 2-demethylmenaquinol + S-adenosyl-L-methionine = a menaquinol + S-adenosyl-L-homocysteine + H(+). It catalyses the reaction a 2-methoxy-6-(all-trans-polyprenyl)benzene-1,4-diol + S-adenosyl-L-methionine = a 5-methoxy-2-methyl-3-(all-trans-polyprenyl)benzene-1,4-diol + S-adenosyl-L-homocysteine + H(+). It participates in quinol/quinone metabolism; menaquinone biosynthesis; menaquinol from 1,4-dihydroxy-2-naphthoate: step 2/2. The protein operates within cofactor biosynthesis; ubiquinone biosynthesis. Its function is as follows. Methyltransferase required for the conversion of demethylmenaquinol (DMKH2) to menaquinol (MKH2) and the conversion of 2-polyprenyl-6-methoxy-1,4-benzoquinol (DDMQH2) to 2-polyprenyl-3-methyl-6-methoxy-1,4-benzoquinol (DMQH2). This chain is Ubiquinone/menaquinone biosynthesis C-methyltransferase UbiE, found in Shewanella piezotolerans (strain WP3 / JCM 13877).